Here is an 861-residue protein sequence, read N- to C-terminus: Bifunctional uridylyltransferase/uridylyl-removing enzyme (861 aa).

Residues Met1 to Arg321 are uridylyltransferase. The segment at Leu322–Thr678 is uridylyl-removing. Residues Val440–Leu562 form the HD domain. ACT domains follow at residues Glu679–Arg760 and Gln788–Tyr861.

This sequence belongs to the GlnD family. Mg(2+) is required as a cofactor.

The enzyme catalyses [protein-PII]-L-tyrosine + UTP = [protein-PII]-uridylyl-L-tyrosine + diphosphate. It catalyses the reaction [protein-PII]-uridylyl-L-tyrosine + H2O = [protein-PII]-L-tyrosine + UMP + H(+). Uridylyltransferase (UTase) activity is inhibited by glutamine, while glutamine activates uridylyl-removing (UR) activity. In terms of biological role, modifies, by uridylylation and deuridylylation, the PII regulatory proteins (GlnB and homologs), in response to the nitrogen status of the cell that GlnD senses through the glutamine level. Under low glutamine levels, catalyzes the conversion of the PII proteins and UTP to PII-UMP and PPi, while under higher glutamine levels, GlnD hydrolyzes PII-UMP to PII and UMP (deuridylylation). Thus, controls uridylylation state and activity of the PII proteins, and plays an important role in the regulation of nitrogen assimilation and metabolism. This Legionella pneumophila (strain Corby) protein is Bifunctional uridylyltransferase/uridylyl-removing enzyme.